A 139-amino-acid polypeptide reads, in one-letter code: Protein archease (139 aa).

Ca(2+) contacts are provided by Asp12, Asp138, and Ile139.

This sequence belongs to the archease family.

Functionally, activates the tRNA-splicing ligase complex by facilitating the enzymatic turnover of catalytic subunit RtcB. Acts by promoting the guanylylation of RtcB, a key intermediate step in tRNA ligation. Can also alter the NTP specificity of RtcB such that ATP, dGTP or ITP is used efficiently. The polypeptide is Protein archease (Saccharolobus solfataricus (strain ATCC 35092 / DSM 1617 / JCM 11322 / P2) (Sulfolobus solfataricus)).